The chain runs to 796 residues: MSVDTQQAPPEPTDEELAGLDAHWRAANYLAVGQIYLMANPLLTDPLRPEHVKPRLLGHWGTSPGLNLVHTHLNRVIKARDLDALCVWGPGHGGPAVLANAWLEGSYTETYPDITRDAAGMARLFKQFSFPGGVPSHVAPETPGSIHEGGELGYALSHAYGAAFDHPDLVVACVIGDGEAETGPLATSWHSNKFLDPVHDGAVLPILHLNGYKIANPTVLARLPETELDELLRGYGHDPVHVTGDDPAAVHRATARAMDTALDRIAAIQRAAREEGATGRPRWPMIVLRTPKGWTGPAEVDGLPVENTWRAHQVPLSAVRTNPEHLAQLERWLRSYRPEELFDDAGAPRPAVLAAIPEGPRRLGATPYANGGLLLRELPVPPLEKYAVPVGEPGASTHEPTRVLGDLLRDVMAATTDRRDFRLVGPDETASNRLQAVYAATGKAWQERTLPVDEDLDRHGRVMEILSEHTCQGWLEGYLLTGRHGLFSCYEAFVHIVDSMVNQHVKWLRVTRRLPWRAPIASLNYLLTSHVWRQDHNGFSHQEPGFVDHILNKSPEAVRVYLPPDANTLLSVADHALRSRDYVNVIVAGKQPCFDWLTMDQAKAHCARGAGIWDWAGTEDGSREPDVVLACAGDVPTLEILAAAQLIRHHLPELAVRVVNVVDIARLLPSGEHPHGMSDFEYDGLFTADKPVIFAYHGYPWLIHRLAYRRTGHAHLHVRGYKEIGTTTTPFDMVVGNDLDRYRLVMDVIDRVPGLAVRAAAVRQRMEDARQRHHDWIREHGVDLPEVADWTWEAPR.

It belongs to the XFP family. Thiamine diphosphate is required as a cofactor.

The protein is Probable phosphoketolase of Streptomyces coelicolor (strain ATCC BAA-471 / A3(2) / M145).